Reading from the N-terminus, the 373-residue chain is Hydrogenase maturation factor HypD (373 aa).

Fe cation contacts are provided by cysteine 41, cysteine 69, and cysteine 72.

The protein belongs to the HypD family. In terms of assembly, monomer. Interacts with HypC. Forms a complex with HypC, or HybG, and HypE. Requires [4Fe-4S] cluster as cofactor.

It functions in the pathway protein modification; [NiFe] hydrogenase maturation. Functionally, involved in the maturation of [NiFe] hydrogenases. Involved in the biosynthesis of the Fe(CN)(2)CO cofactor. HypD may act as a scaffold on which the Fe(CN)(2)CO cofactor is formed. In complex with HypC, accepts the cyanide ligand generated by HypF and HypE, and also coordinates the carbon monoxide ligand. Required for the formation of all three hydrogenase isoenzymes. The protein is Hydrogenase maturation factor HypD of Escherichia coli (strain K12).